The following is a 401-amino-acid chain: Enoyl-[acyl-carrier-protein] reductase [NADH] (401 aa).

NAD(+) contacts are provided by residues 48 to 53, 74 to 75, 111 to 112, and 140 to 141; these read GASSGY, FE, DA, and LA. Tyrosine 226 is a binding site for substrate. Residue tyrosine 236 is the Proton donor of the active site. Residues lysine 245 and 274–276 contribute to the NAD(+) site; that span reads VVT.

The protein belongs to the TER reductase family. Monomer.

It catalyses the reaction a 2,3-saturated acyl-[ACP] + NAD(+) = a (2E)-enoyl-[ACP] + NADH + H(+). It functions in the pathway lipid metabolism; fatty acid biosynthesis. Its function is as follows. Involved in the final reduction of the elongation cycle of fatty acid synthesis (FAS II). Catalyzes the reduction of a carbon-carbon double bond in an enoyl moiety that is covalently linked to an acyl carrier protein (ACP). This chain is Enoyl-[acyl-carrier-protein] reductase [NADH], found in Xylella fastidiosa (strain 9a5c).